We begin with the raw amino-acid sequence, 367 residues long: UDP-N-acetylglucosamine--N-acetylmuramyl-(pentapeptide) pyrophosphoryl-undecaprenol N-acetylglucosamine transferase (367 aa).

UDP-N-acetyl-alpha-D-glucosamine contacts are provided by residues 15–17, asparagine 127, arginine 163, serine 191, isoleucine 249, and glutamine 294; that span reads TGG.

Belongs to the glycosyltransferase 28 family. MurG subfamily.

The protein resides in the cell inner membrane. The catalysed reaction is di-trans,octa-cis-undecaprenyl diphospho-N-acetyl-alpha-D-muramoyl-L-alanyl-D-glutamyl-meso-2,6-diaminopimeloyl-D-alanyl-D-alanine + UDP-N-acetyl-alpha-D-glucosamine = di-trans,octa-cis-undecaprenyl diphospho-[N-acetyl-alpha-D-glucosaminyl-(1-&gt;4)]-N-acetyl-alpha-D-muramoyl-L-alanyl-D-glutamyl-meso-2,6-diaminopimeloyl-D-alanyl-D-alanine + UDP + H(+). Its pathway is cell wall biogenesis; peptidoglycan biosynthesis. In terms of biological role, cell wall formation. Catalyzes the transfer of a GlcNAc subunit on undecaprenyl-pyrophosphoryl-MurNAc-pentapeptide (lipid intermediate I) to form undecaprenyl-pyrophosphoryl-MurNAc-(pentapeptide)GlcNAc (lipid intermediate II). The protein is UDP-N-acetylglucosamine--N-acetylmuramyl-(pentapeptide) pyrophosphoryl-undecaprenol N-acetylglucosamine transferase of Burkholderia thailandensis (strain ATCC 700388 / DSM 13276 / CCUG 48851 / CIP 106301 / E264).